The chain runs to 546 residues: Carotenoid 9,10(9',10')-cleavage dioxygenase (546 aa).

4 residues coordinate Fe cation: His-226, His-274, His-340, and His-530.

The protein belongs to the carotenoid oxygenase family. Fe(2+) serves as cofactor. In terms of tissue distribution, in vegetative and floral tissues.

It is found in the cytoplasm. It carries out the reaction all-trans-zeaxanthin + 2 O2 = 4,9-dimethyldodeca-2,4,6,8,10-pentaenedial + 2 (3R)-hydroxy-beta-ionone. Functionally, cleaves a variety of carotenoids symmetrically at both the 9-10 and 9'-10' double bonds. Catalyzes the formation of 4,9-dimethyldodeca-2,4,6,8,10-pentaene-1,12-dialdehyde and probably hydroxydihydro-beta-ionone from zeaxanthin. This chain is Carotenoid 9,10(9',10')-cleavage dioxygenase (CCD), found in Crocus sativus (Saffron).